A 496-amino-acid polypeptide reads, in one-letter code: Genome polyprotein (496 aa).

At 1–447 the chain is on the extracellular side; the sequence is SRCTHLENRD…HTVLGGAFNS (447 aa). 6 disulfides stabilise this stretch: C3–C30, C60–C116, C60–C121, C74–C105, C92–C116, and C92–C121. The interval 98–111 is fusion peptide; that stretch reads DRGWGNHCGLFGKG. N154 carries an N-linked (GlcNAc...) asparagine; by host glycan. Cystine bridges form between C186–C290 and C307–C338. Residues 448-468 form a helical membrane-spanning segment; that stretch reads IFGGVGFLPKLLMGVALAWLG. At 469–479 the chain is on the cytoplasmic side; that stretch reads LNTRNPTMSIS. The helical transmembrane segment at 480–496 threads the bilayer; that stretch reads FLLTGGLVLAMTLGVGA.

In terms of assembly, homodimer; in the endoplasmic reticulum and Golgi. Post-translationally, N-glycosylated.

The protein resides in the virion membrane. It localises to the host endoplasmic reticulum membrane. Binds to host cell surface receptor and mediates fusion between viral and cellular membranes. Envelope protein is synthesized in the endoplasmic reticulum in the form of heterodimer with protein prM. They play a role in virion budding in the ER, and the newly formed immature particle is covered with 60 spikes composed of heterodimer between precursor prM and envelope protein E. The virion is transported to the Golgi apparatus where the low pH causes dissociation of PrM-E heterodimers and formation of E homodimers. prM-E cleavage is ineficient, and many virions are only partially matured. These uncleaved prM would play a role in immune evasion. The polypeptide is Genome polyprotein (Louping ill virus (strain SB 526) (Li)).